A 307-amino-acid polypeptide reads, in one-letter code: Streptomycin 6-kinase (307 aa).

133–145 is a streptomycin binding site; it reads LAGLLARLVSVPA. Catalysis depends on aspartate 201, which acts as the Proton acceptor.

It belongs to the aminoglycoside phosphotransferase family.

The catalysed reaction is streptomycin + ATP = streptomycin 6-phosphate + ADP + H(+). Its function is as follows. The aminoglycoside phosphotransferases achieve inactivation of their antibiotic substrates by phosphorylation. The chain is Streptomycin 6-kinase (sph) from Streptomyces glaucescens.